Reading from the N-terminus, the 838-residue chain is Sec1 family domain-containing protein MIP3 (838 aa).

Residues Lys637 to Asp677 are disordered. The segment covering Ser646–Asp658 has biased composition (acidic residues).

This sequence belongs to the STXBP/unc-18/SEC1 family. In terms of assembly, forms a complex with MAG2, ZW10/MIP1 and MIP2 on the endoplasmic reticulum.

Its subcellular location is the endoplasmic reticulum membrane. Required for proper maturation of seed storage proteins. Forms a complex with MAG2, ZW10/MIP1 and MIP2 on the endoplasmic reticulum that may be responsible for efficient transport of seed storage proteins. The chain is Sec1 family domain-containing protein MIP3 from Arabidopsis thaliana (Mouse-ear cress).